Consider the following 360-residue polypeptide: Photosystem II protein D1 3 (360 aa).

A run of 3 helical transmembrane segments spans residues 29-46 (YVGW…TATI), 118-133 (HFLL…QWEL), and 142-156 (WICV…AAFA). Residue H118 coordinates chlorophyll a. Pheophytin a is bound at residue Y126. Positions 170 and 189 each coordinate [CaMn4O5] cluster. A helical membrane pass occupies residues 197-218 (FHMLGVAGVFGGSLFSAMHGSL). H198 lines the chlorophyll a pocket. Residues H215 and 264–265 (SF) contribute to the a quinone site. H215 serves as a coordination point for Fe cation. H272 serves as a coordination point for Fe cation. Residues 274–288 (FLGAWPVVGIWFTSM) traverse the membrane as a helical segment. [CaMn4O5] cluster contacts are provided by H332, E333, D342, and A344. Positions 345–360 (AGEATPVALTAPSIHG) are excised as a propeptide.

Belongs to the reaction center PufL/M/PsbA/D family. As to quaternary structure, PSII is composed of 1 copy each of membrane proteins PsbA, PsbB, PsbC, PsbD, PsbE, PsbF, PsbH, PsbI, PsbJ, PsbK, PsbL, PsbM, PsbT, PsbX, PsbY, PsbZ, Psb30/Ycf12, peripheral proteins PsbO, CyanoQ (PsbQ), PsbU, PsbV and a large number of cofactors. It forms dimeric complexes. The D1/D2 heterodimer binds P680, chlorophylls that are the primary electron donor of PSII, and subsequent electron acceptors. It shares a non-heme iron and each subunit binds pheophytin, quinone, additional chlorophylls, carotenoids and lipids. D1 provides most of the ligands for the Mn4-Ca-O5 cluster of the oxygen-evolving complex (OEC). There is also a Cl(-1) ion associated with D1 and D2, which is required for oxygen evolution. The PSII complex binds additional chlorophylls, carotenoids and specific lipids. serves as cofactor. Post-translationally, tyr-161 forms a radical intermediate that is referred to as redox-active TyrZ, YZ or Y-Z. C-terminally processed by CtpA; processing is essential to allow assembly of the oxygen-evolving complex and thus photosynthetic growth.

Its subcellular location is the cellular thylakoid membrane. It carries out the reaction 2 a plastoquinone + 4 hnu + 2 H2O = 2 a plastoquinol + O2. Photosystem II (PSII) is a light-driven water:plastoquinone oxidoreductase that uses light energy to abstract electrons from H(2)O, generating O(2) and a proton gradient subsequently used for ATP formation. It consists of a core antenna complex that captures photons, and an electron transfer chain that converts photonic excitation into a charge separation. The D1/D2 (PsbA/PsbD) reaction center heterodimer binds P680, the primary electron donor of PSII as well as several subsequent electron acceptors. The chain is Photosystem II protein D1 3 from Synechococcus sp. (strain ATCC 27144 / PCC 6301 / SAUG 1402/1) (Anacystis nidulans).